The sequence spans 275 residues: Rhamnulose-1-phosphate aldolase (275 aa).

The active site involves Glu-117. Zn(2+) contacts are provided by His-141, His-143, and His-212.

This sequence belongs to the aldolase class II family. RhaD subfamily. In terms of assembly, homotetramer. Zn(2+) serves as cofactor.

The protein resides in the cytoplasm. It carries out the reaction L-rhamnulose 1-phosphate = (S)-lactaldehyde + dihydroxyacetone phosphate. The protein operates within carbohydrate degradation; L-rhamnose degradation; glycerone phosphate from L-rhamnose: step 3/3. Catalyzes the reversible cleavage of L-rhamnulose-1-phosphate to dihydroxyacetone phosphate (DHAP) and L-lactaldehyde. This chain is Rhamnulose-1-phosphate aldolase, found in Salmonella heidelberg (strain SL476).